Here is a 576-residue protein sequence, read N- to C-terminus: Sulfite reductase [NADPH] hemoprotein beta-component (576 aa).

Positions 1-12 (MDAKTQPDRSRD) are enriched in basic and acidic residues. The interval 1-26 (MDAKTQPDRSRDVSQPLDKLGPDETL) is disordered. 4 residues coordinate [4Fe-4S] cluster: cysteine 441, cysteine 447, cysteine 486, and cysteine 490. Cysteine 490 lines the siroheme pocket.

The protein belongs to the nitrite and sulfite reductase 4Fe-4S domain family. In terms of assembly, alpha(8)-beta(8). The alpha component is a flavoprotein, the beta component is a hemoprotein. The cofactor is siroheme. It depends on [4Fe-4S] cluster as a cofactor.

It catalyses the reaction hydrogen sulfide + 3 NADP(+) + 3 H2O = sulfite + 3 NADPH + 4 H(+). It functions in the pathway sulfur metabolism; hydrogen sulfide biosynthesis; hydrogen sulfide from sulfite (NADPH route): step 1/1. Its function is as follows. Component of the sulfite reductase complex that catalyzes the 6-electron reduction of sulfite to sulfide. This is one of several activities required for the biosynthesis of L-cysteine from sulfate. In Nitrobacter winogradskyi (strain ATCC 25391 / DSM 10237 / CIP 104748 / NCIMB 11846 / Nb-255), this protein is Sulfite reductase [NADPH] hemoprotein beta-component.